Reading from the N-terminus, the 238-residue chain is Ribonuclease PH (238 aa).

Phosphate contacts are provided by residues Arg-86 and 124–126 (GTR).

The protein belongs to the RNase PH family. As to quaternary structure, homohexameric ring arranged as a trimer of dimers.

It carries out the reaction tRNA(n+1) + phosphate = tRNA(n) + a ribonucleoside 5'-diphosphate. Phosphorolytic 3'-5' exoribonuclease that plays an important role in tRNA 3'-end maturation. Removes nucleotide residues following the 3'-CCA terminus of tRNAs; can also add nucleotides to the ends of RNA molecules by using nucleoside diphosphates as substrates, but this may not be physiologically important. Probably plays a role in initiation of 16S rRNA degradation (leading to ribosome degradation) during starvation. The polypeptide is Ribonuclease PH (Alkalilimnicola ehrlichii (strain ATCC BAA-1101 / DSM 17681 / MLHE-1)).